The primary structure comprises 148 residues: 3-dehydroquinate dehydratase (148 aa).

The Proton acceptor role is filled by Y26. Substrate contacts are provided by N77, H83, and D90. H103 functions as the Proton donor in the catalytic mechanism. Substrate contacts are provided by residues 104–105 and R114; that span reads LS.

It belongs to the type-II 3-dehydroquinase family. In terms of assembly, homododecamer.

It catalyses the reaction 3-dehydroquinate = 3-dehydroshikimate + H2O. Its pathway is metabolic intermediate biosynthesis; chorismate biosynthesis; chorismate from D-erythrose 4-phosphate and phosphoenolpyruvate: step 3/7. Catalyzes a trans-dehydration via an enolate intermediate. This chain is 3-dehydroquinate dehydratase (aroQ), found in Pasteurella multocida (strain Pm70).